A 284-amino-acid polypeptide reads, in one-letter code: Homeobox protein SIX1 (284 aa).

Positions 124 to 183 form a DNA-binding region, homeobox; it reads GEETSYCFKEKSRGVLREWYAHNPYPSPREKRELAEATGLTTTQVSNWFKNRRQRDRAAE. The disordered stretch occupies residues 168–271; the sequence is VSNWFKNRRQ…AHQHQLQDSL (104 aa). The segment covering 179–190 has biased composition (basic and acidic residues); the sequence is DRAAEAKERENT. Over residues 242 to 271 the composition is skewed to polar residues; sequence RSSNYSLPGLTASQPSHGLQAHQHQLQDSL.

This sequence belongs to the SIX/Sine oculis homeobox family. In terms of assembly, interacts with DACH1. Interacts with EYA1. Interacts with EYA2. Interacts with CDH1. Interacts with TBX18. Interacts with CEBPA. Interacts with CEBPB. Interacts with EBF2. Post-translationally, phosphorylated during interphase; becomes hyperphosphorylated during mitosis. Hyperphosphorylation impairs binding to promoter elements. Ubiquitinated by the anaphase promoting complex (APC), leading to its proteasomal degradation.

The protein resides in the nucleus. The protein localises to the cytoplasm. Its function is as follows. Transcription factor that is involved in the regulation of cell proliferation, apoptosis and embryonic development. Plays an important role in the development of several organs, including kidney, muscle and inner ear. Depending on context, functions as a transcriptional repressor or activator. Lacks an activation domain, and requires interaction with EYA family members for transcription activation. Mediates nuclear translocation of EYA1 and EYA2. Binds the 5'-TCA[AG][AG]TTNC-3' motif present in the MEF3 element in the MYOG promoter and CIDEA enhancer. Regulates the expression of numerous genes, including MYC, CCNA1, CCND1 and EZR. Acts as an activator of the IGFBP5 promoter, probably coactivated by EYA2. Repression of precursor cell proliferation in myoblasts is switched to activation through recruitment of EYA3 to the SIX1-DACH1 complex. During myogenesis, seems to act together with EYA2 and DACH2. Regulates the expression of CCNA1. Promotes brown adipocyte differentiation. The sequence is that of Homeobox protein SIX1 (SIX1) from Lagothrix lagotricha (Brown woolly monkey).